A 387-amino-acid polypeptide reads, in one-letter code: 3-ketoacyl-CoA thiolase (387 aa).

The active-site Acyl-thioester intermediate is cysteine 91. Residues histidine 343 and cysteine 373 each act as proton acceptor in the active site.

Belongs to the thiolase-like superfamily. Thiolase family. As to quaternary structure, heterotetramer of two alpha chains (FadB) and two beta chains (FadA).

The protein localises to the cytoplasm. The catalysed reaction is an acyl-CoA + acetyl-CoA = a 3-oxoacyl-CoA + CoA. The protein operates within lipid metabolism; fatty acid beta-oxidation. Catalyzes the final step of fatty acid oxidation in which acetyl-CoA is released and the CoA ester of a fatty acid two carbons shorter is formed. In Escherichia fergusonii (strain ATCC 35469 / DSM 13698 / CCUG 18766 / IAM 14443 / JCM 21226 / LMG 7866 / NBRC 102419 / NCTC 12128 / CDC 0568-73), this protein is 3-ketoacyl-CoA thiolase.